The chain runs to 371 residues: 2-aminoethylphosphonate--pyruvate transaminase (371 aa).

K195 carries the N6-(pyridoxal phosphate)lysine modification.

Belongs to the class-V pyridoxal-phosphate-dependent aminotransferase family. PhnW subfamily. Homotetramer; however this is for an enzyme with a molecular weight of 16500, which is in disagreement with the weight of this protein. Pyridoxal 5'-phosphate is required as a cofactor.

It carries out the reaction (2-aminoethyl)phosphonate + pyruvate = phosphonoacetaldehyde + L-alanine. Inhibited by phosphonic acids and very slightly inhibited by aminophosphonic acids. Functionally, involved in phosphonate degradation. The polypeptide is 2-aminoethylphosphonate--pyruvate transaminase (phnW) (Pseudomonas aeruginosa (strain ATCC 15692 / DSM 22644 / CIP 104116 / JCM 14847 / LMG 12228 / 1C / PRS 101 / PAO1)).